The chain runs to 481 residues: Beta-amyrin 28-monooxygenase (481 aa).

Residues 4 to 24 (FYVPLLSLFVLFVSLSFYFLF) traverse the membrane as a helical segment. Cys428 is a heme binding site.

It belongs to the cytochrome P450 family. Requires heme as cofactor.

It is found in the membrane. It catalyses the reaction beta-amyrin + 3 reduced [NADPH--hemoprotein reductase] + 3 O2 = oleanolate + 3 oxidized [NADPH--hemoprotein reductase] + 4 H2O + 4 H(+). Catalyzes the oxidation of the methyl group to a carboxyl group at the C-28 position of beta-amyrin to form oleanolate. The polypeptide is Beta-amyrin 28-monooxygenase (Kalopanax septemlobus (Castor aralia)).